Consider the following 382-residue polypeptide: Anhydro-N-acetylmuramic acid kinase (382 aa).

Position 22 to 29 (22 to 29 (GTSMDGVD)) interacts with ATP.

Belongs to the anhydro-N-acetylmuramic acid kinase family.

The catalysed reaction is 1,6-anhydro-N-acetyl-beta-muramate + ATP + H2O = N-acetyl-D-muramate 6-phosphate + ADP + H(+). It participates in amino-sugar metabolism; 1,6-anhydro-N-acetylmuramate degradation. Its pathway is cell wall biogenesis; peptidoglycan recycling. Its function is as follows. Catalyzes the specific phosphorylation of 1,6-anhydro-N-acetylmuramic acid (anhMurNAc) with the simultaneous cleavage of the 1,6-anhydro ring, generating MurNAc-6-P. Is required for the utilization of anhMurNAc either imported from the medium or derived from its own cell wall murein, and thus plays a role in cell wall recycling. This is Anhydro-N-acetylmuramic acid kinase from Burkholderia orbicola (strain MC0-3).